The chain runs to 85 residues: Protein RALF-like 28 (85 aa).

A signal peptide spans 1-31; the sequence is MSILKETKRFMVVAMFIACVFISNNMNVAVA. 2 disulfide bridges follow: Cys48/Cys53 and Cys66/Cys72. Positions 60–85 are disordered; that stretch reads NPYHRGCEKSKRCRGPDPPALPRKMI. The span at 75–85 shows a compositional bias: pro residues; sequence PDPPALPRKMI.

This sequence belongs to the plant rapid alkalinization factor (RALF) family.

The protein resides in the secreted. Cell signaling peptide that may regulate plant stress, growth, and development. Mediates a rapid alkalinization of extracellular space by mediating a transient increase in the cytoplasmic Ca(2+) concentration leading to a calcium-dependent signaling events through a cell surface receptor and a concomitant activation of some intracellular mitogen-activated protein kinases. This is Protein RALF-like 28 (RALFL28) from Arabidopsis thaliana (Mouse-ear cress).